Consider the following 553-residue polypeptide: Sensitive to high expression protein 9 homolog, mitochondrial (553 aa).

Positions phenylalanine 61–threonine 174 are disordered. Over residues phenylalanine 62–valine 84 the composition is skewed to polar residues. A compositionally biased stretch (basic and acidic residues) spans alanine 103 to threonine 116. Low complexity predominate over residues serine 133–asparagine 160. Coiled coils occupy residues serine 210–lysine 241 and arginine 277–alanine 309. A helical transmembrane segment spans residues tryptophan 331–alanine 351. At glutamate 352–serine 523 the chain is on the mitochondrial intermembrane side. Disordered stretches follow at residues alanine 408–glycine 428 and alanine 443–serine 497. 2 stretches are compositionally biased toward low complexity: residues alanine 443–glutamate 473 and threonine 484–threonine 495. The chain crosses the membrane as a helical span at residues leucine 524–valine 544. The Mitochondrial matrix portion of the chain corresponds to leucine 545–alanine 553.

It belongs to the SHE9 family. Homooligomer.

The protein resides in the mitochondrion inner membrane. Functionally, required for the maintenance of the structure of the mitochondrial inner membrane. Involved in mitochondrial morphology. Causes growth arrest when highly overexpressed. This Neurospora crassa (strain ATCC 24698 / 74-OR23-1A / CBS 708.71 / DSM 1257 / FGSC 987) protein is Sensitive to high expression protein 9 homolog, mitochondrial (she-9).